A 590-amino-acid chain; its full sequence is Oleate hydratase (590 aa).

Residues Ala33, Glu56, Ser64, and Glu82 each coordinate FAD. The Proton acceptor role is filled by Glu82. Tyr200 acts as the Proton donor in catalysis. Residues Val249, Ser291, Thr508, and Ser512 each contribute to the FAD site.

The protein belongs to the oleate hydratase family. Monomer and homodimer. Both forms seem to be active. It depends on FAD as a cofactor.

It carries out the reaction (R)-10-hydroxyoctadecanoate = (9Z)-octadecenoate + H2O. It catalyses the reaction (9Z)-octadecenoate + H2O = 10-hydroxyoctadecanoate. The enzyme catalyses (9Z)-hexadecenoate + H2O = 10-hydroxyhexadecanoate. The catalysed reaction is (9Z,12Z)-octadecadienoate + H2O = (12Z)-10-hydroxyoctadecenoate. It carries out the reaction (12Z)-10-hydroxyoctadecenoate + H2O = 10,13-dihydroxyoctadecanoate. It catalyses the reaction (9Z,12Z,15Z)-octadecatrienoate + H2O = (12Z,15Z)-10-hydroxyoctadecadienoate. Its pathway is lipid metabolism; fatty acid metabolism. Its function is as follows. Catalyzes the hydration of oleate at its cis-9-double bond to yield 10-hydroxyoctadecanoate, probably in the (R) configuration, and of linoleate at its cis-9- and cis-12-double bond to yield 10-hydroxy-12-octadecenoate and 10,13-dihydroxyoctadecanoate. Is not active on trans-double bonds and esterified fatty acids as substrate; is only active on cis-9- and/or cis-12-double bond of C16 and C18 fatty acids without any trans-configurations, producing 10-hydroxy and 10,13-dihydroxy derivatives. Appears to play a role in oleic acid detoxification and bacterial virulence. The sequence is that of Oleate hydratase (sph) from Streptococcus pyogenes serotype M49 (strain NZ131).